The sequence spans 109 residues: Transcription initiation factor IIA subunit 2 (109 aa).

The protein belongs to the TFIIA subunit 2 family. As to quaternary structure, TFIIA is a heterodimer of the large unprocessed subunit 1 and a small subunit gamma. It was originally believed to be a heterotrimer of an alpha (p35), a beta (p19) and a gamma subunit (p12). Interacts with NCOA6 general coactivator. TFIIA forms a complex with TBP. Interacts with HSF1 (via transactivation domain). Part of TBP-based Pol II pre-initiation complex (PIC), in which Pol II core assembles with general transcription factors and other specific initiation factors including GTF2E1, GTF2E2, GTF2F1, GTF2F2, TCEA1, ERCC2, ERCC3, GTF2H2, GTF2H3, GTF2H4, GTF2H5, GTF2A1, GTF2A2, GTF2B and TBP; this large multi-subunit PIC complex mediates DNA unwinding and targets Pol II core to the transcription start site where the first phosphodiester bond forms.

The protein localises to the nucleus. In terms of biological role, TFIIA is a component of the transcription machinery of RNA polymerase II and plays an important role in transcriptional activation. TFIIA in a complex with TBP mediates transcriptional activity. The polypeptide is Transcription initiation factor IIA subunit 2 (Gtf2a2) (Rattus norvegicus (Rat)).